A 253-amino-acid chain; its full sequence is MSFIVHNRRSSKKQFQVDPLLMPKVPRINYLHIQEEKHRLQLKKFLLHRLFLVGYIQANTEKKEISEYYEQLFQSILKHHLGEVVTGLFLIYPSSFLHILESSNGTLFRILLDYVAHEKSEREFMIQNMKIIVASHNIPTRLFMQWHISIIKVPVLYLDDDTQSQSVEEVTTDFLTLTHKLALHLYKTVKLGGKGPGDNLHQLAPELILPEKTIKYLCKATEFMDPASFLSMYNRPIHITMDSDIVWPAPSRF.

The chain is Testis-expressed protein 47 from Rattus norvegicus (Rat).